The primary structure comprises 154 residues: Large ribosomal subunit protein uL30 (154 aa).

The interval 122 to 141 (RGGHDGIKTPASDGGQLGKH) is disordered.

It belongs to the universal ribosomal protein uL30 family. In terms of assembly, part of the 50S ribosomal subunit.

The protein is Large ribosomal subunit protein uL30 of Halobacterium salinarum (strain ATCC 29341 / DSM 671 / R1).